A 1521-amino-acid polypeptide reads, in one-letter code: Probable DNA topoisomerase 2 (1521 aa).

Positions 1-10 (MSDSENDYSD) are enriched in acidic residues. The disordered stretch occupies residues 1–87 (MSDSENDYSD…DDKSSSSDNE (87 aa)). Positions 36–48 (SKKKASATRKPAA) are enriched in basic residues. Positions 49-62 (KKATTTTTSTTKKS) are enriched in low complexity. ATP is bound by residues N163, N192, 220–222 (SSH), and 233–240 (GRNGFGAK). The interaction with DNA stretch occupies residues 412–414 (NKK). An ATP-binding site is contributed by 446–448 (QTK). Positions 527–640 (CTLILTEGDS…TLLRMPGFLV (114 aa)) constitute a Toprim domain. Positions 533, 609, and 611 each coordinate Mg(2+). The Topo IIA-type catalytic domain maps to 771 to 1273 (IPNIVDGLKT…PIQEIYKRDL (503 aa)). Y861 serves as the catalytic O-(5'-phospho-DNA)-tyrosine intermediate. A disordered region spans residues 1007–1047 (GTRKKKKEEKEKKAASRKGTKAKPTTTKRSKRVDDDDDNEK). Over residues 1021–1037 (ASRKGTKAKPTTTKRSK) the composition is skewed to basic residues. The interaction with DNA stretch occupies residues 1085–1094 (KLVSTINETN). Disordered stretches follow at residues 1192–1222 (KIKKKKNAFDEEDAAISSDEEKDGAQEEQDD) and 1335–1521 (IPTT…SDSD). Acidic residues predominate over residues 1201 to 1222 (DEEDAAISSDEEKDGAQEEQDD). The segment covering 1354-1368 (TTSTSTSTTTSSNTK) has biased composition (low complexity). Residues 1422 to 1438 (LSDESDQESDQESDQGS) show a composition bias toward acidic residues. Over residues 1454 to 1467 (PTTIATKKATTSKS) the composition is skewed to low complexity. Basic and acidic residues predominate over residues 1468–1480 (KVIDDKSSDDEVI). Residues 1503–1521 (SDSDDDDLYDNEESSSDSD) are compositionally biased toward acidic residues.

The protein belongs to the type II topoisomerase family. As to quaternary structure, homodimer. It depends on Mg(2+) as a cofactor. Requires Mn(2+) as cofactor. Ca(2+) is required as a cofactor.

It localises to the nucleus. The enzyme catalyses ATP-dependent breakage, passage and rejoining of double-stranded DNA.. In terms of biological role, control of topological states of DNA by transient breakage and subsequent rejoining of DNA strands. Topoisomerase II makes double-strand breaks. In Dictyostelium discoideum (Social amoeba), this protein is Probable DNA topoisomerase 2 (top2).